We begin with the raw amino-acid sequence, 114 residues long: Ribonuclease P protein component (114 aa).

Belongs to the RnpA family. Consists of a catalytic RNA component (M1 or rnpB) and a protein subunit.

The catalysed reaction is Endonucleolytic cleavage of RNA, removing 5'-extranucleotides from tRNA precursor.. Its function is as follows. RNaseP catalyzes the removal of the 5'-leader sequence from pre-tRNA to produce the mature 5'-terminus. It can also cleave other RNA substrates such as 4.5S RNA. The protein component plays an auxiliary but essential role in vivo by binding to the 5'-leader sequence and broadening the substrate specificity of the ribozyme. This Exiguobacterium sp. (strain ATCC BAA-1283 / AT1b) protein is Ribonuclease P protein component.